Consider the following 651-residue polypeptide: ATP-dependent RNA helicase MRH4, mitochondrial (651 aa).

The transit peptide at 1–61 directs the protein to the mitochondrion; it reads MLRSSLGSVC…SNARQATRRE (61 aa). Residues 45-56 show a composition bias toward polar residues; it reads SSLSFSTSNARQ. The tract at residues 45-137 is disordered; the sequence is SSLSFSTSNA…GGKKLGRDGK (93 aa). Basic and acidic residues-rich tracts occupy residues 72–83 and 124–137; these read RVGRSTARDGDK and NGRE…RDGK. A Q motif motif is present at residues 167 to 200; sequence DSFDQFDLLPQVKDAVLNEALKGMLDIKPTPVQR. The segment at 210–241 is disordered; sequence TTGARSRWRTKSKPADSGSEAASPDAPPPPRE. Over residues 224-233 the composition is skewed to low complexity; sequence ADSGSEAASP. One can recognise a Helicase ATP-binding domain in the interval 234–445; that stretch reads DAPPPPREEF…ASRFPNMRRI (212 aa). Residue 247–254 coordinates ATP; sequence AETGSGKT. Positions 392-395 match the DEAD box motif; the sequence is DEAD. The Helicase C-terminal domain maps to 494–651; that stretch reads PVKGQVDVRR…ESMFMGQALV (158 aa).

It belongs to the DEAD box helicase family. MRH4 subfamily.

It localises to the mitochondrion. The catalysed reaction is ATP + H2O = ADP + phosphate + H(+). ATP-binding RNA helicase involved in mitochondrial RNA metabolism. Required for maintenance of mitochondrial DNA. The chain is ATP-dependent RNA helicase MRH4, mitochondrial (MRH4) from Pyricularia oryzae (strain 70-15 / ATCC MYA-4617 / FGSC 8958) (Rice blast fungus).